The chain runs to 517 residues: Acyltransferase AFT15-1 (517 aa).

The Proton acceptor role is filled by His180.

The protein belongs to the plant acyltransferase family.

The protein operates within mycotoxin biosynthesis. In terms of biological role, acyltransferase; part of the gene clusters that mediate the biosynthesis of the host-selective toxins (HSTs) AF-toxins responsible for Alternaria black spot of strawberry disease by the strawberry pathotype. AF-toxin I and III are valine derivatives of 2,3-dyhydroxy-isovaleric acid and 2-hydroxy-isovaleric acid respectively, while AF II is an isoleucine derivative of 2-hydroxy-valeric acid. These derivatives are bound to a 9,10-epoxy-8-hydroxy-9-methyl-decatrienoic acid (EDA) moiety. On cellular level, AF-toxins affect plasma membrane of susceptible cells and cause a sudden increase in loss of K(+) after a few minutes of toxin treatment. The aldo-keto reductase AFTS1 catalyzes the conversion of 2-keto-isovaleric acid (2-KIV) to 2-hydroxy-isovaleric acid (2-HIV) by reduction of its ketone to an alcohol. The acyl-CoA ligase AFT1, the hydrolase AFT2 and the enoyl-CoA hydratases AFT3 and AFT6, but also the polyketide synthase AFT9, the acyl-CoA dehydrogenase AFT10, the cytochrome P450 monooxygenase AFT11 and the oxidoreductase AFT12 are all involved in the biosynthesis of the AK-, AF- and ACT-toxin common EDA structural moiety. The exact function of each enzyme, and of additional enzymes identified within the AF-toxin clusters have still to be determined. This chain is Acyltransferase AFT15-1 (AFT15-1), found in Alternaria alternata (Alternaria rot fungus).